A 246-amino-acid polypeptide reads, in one-letter code: Spherulin-1A (246 aa).

Positions 1 to 19 are cleaved as a signal peptide; that stretch reads MKSTFLFALFVLFLAASEA. Residues 23–45 form a disordered region; the sequence is YPTNPPTTPPTPAPTSTPLPSSA. A compositionally biased stretch (pro residues) spans 25 to 39; it reads TNPPTTPPTPAPTST. Residues 74 to 220 enclose the Cupin type-1 domain; that stretch reads FDFKNSKLGV…SLNISSIQTV (147 aa). Mn(2+) is bound by residues H123, H125, E130, and H170. A glycan (N-linked (GlcNAc...) asparagine) is linked at N213.

Belongs to the germin family.

It is found in the secreted. It localises to the cell wall. The protein is Spherulin-1A of Physarum polycephalum (Slime mold).